Reading from the N-terminus, the 81-residue chain is Small ribosomal subunit protein bS18 (81 aa).

The protein belongs to the bacterial ribosomal protein bS18 family. In terms of assembly, part of the 30S ribosomal subunit. Forms a tight heterodimer with protein bS6.

Functionally, binds as a heterodimer with protein bS6 to the central domain of the 16S rRNA, where it helps stabilize the platform of the 30S subunit. The protein is Small ribosomal subunit protein bS18 of Rubrobacter xylanophilus (strain DSM 9941 / JCM 11954 / NBRC 16129 / PRD-1).